The primary structure comprises 362 residues: Heat-inducible transcription repressor HrcA (362 aa).

The protein belongs to the HrcA family.

Its function is as follows. Negative regulator of class I heat shock genes (grpE-dnaK-dnaJ and groELS operons). Prevents heat-shock induction of these operons. This chain is Heat-inducible transcription repressor HrcA, found in Rhodopseudomonas palustris (strain BisB18).